Here is a 72-residue protein sequence, read N- to C-terminus: Translation initiation factor IF-1 (72 aa).

Positions 1 to 72 (MAKEDCIEME…TKGRIKFRSK (72 aa)) constitute an S1-like domain.

It belongs to the IF-1 family. In terms of assembly, component of the 30S ribosomal translation pre-initiation complex which assembles on the 30S ribosome in the order IF-2 and IF-3, IF-1 and N-formylmethionyl-tRNA(fMet); mRNA recruitment can occur at any time during PIC assembly.

The protein localises to the cytoplasm. One of the essential components for the initiation of protein synthesis. Stabilizes the binding of IF-2 and IF-3 on the 30S subunit to which N-formylmethionyl-tRNA(fMet) subsequently binds. Helps modulate mRNA selection, yielding the 30S pre-initiation complex (PIC). Upon addition of the 50S ribosomal subunit IF-1, IF-2 and IF-3 are released leaving the mature 70S translation initiation complex. The sequence is that of Translation initiation factor IF-1 from Francisella tularensis subsp. tularensis (strain FSC 198).